Consider the following 237-residue polypeptide: MADLQTQMKQAVALAATDQVKNGMVLGLGSGSTAALMIQEVGARLRDGRLTDIVGVTTSFQGEVLAAELGIPLQSLNAIDRIDLAIDGADEVDPAFELIKGGGACHVQEKLVARRAERFVVVVDSTKLVERLNLGFLLPVEVLAGAWRQVQAELQQLGGSAELRMAQRKAGPVVTDQGNLVLDVSFAGGINDPAGLETTINNIPGVLENGLFVGLADQVLVGEINDGVAGVRDLVKS.

Residues 30 to 33 (SGST), 87 to 90 (DGAD), and 100 to 103 (KGGG) each bind substrate. The active-site Proton acceptor is Glu-109. Residue Lys-127 coordinates substrate.

This sequence belongs to the ribose 5-phosphate isomerase family. In terms of assembly, homodimer.

The catalysed reaction is aldehydo-D-ribose 5-phosphate = D-ribulose 5-phosphate. It functions in the pathway carbohydrate degradation; pentose phosphate pathway; D-ribose 5-phosphate from D-ribulose 5-phosphate (non-oxidative stage): step 1/1. Functionally, catalyzes the reversible conversion of ribose-5-phosphate to ribulose 5-phosphate. This is Ribose-5-phosphate isomerase A from Synechococcus sp. (strain RCC307).